We begin with the raw amino-acid sequence, 79 residues long: Acyl carrier protein (79 aa).

The 76-residue stretch at 2–77 folds into the Carrier domain; the sequence is STIEERVKKI…QAIDYVKVHV (76 aa). At serine 37 the chain carries O-(pantetheine 4'-phosphoryl)serine.

Belongs to the acyl carrier protein (ACP) family. 4'-phosphopantetheine is transferred from CoA to a specific serine of apo-ACP by AcpS. This modification is essential for activity because fatty acids are bound in thioester linkage to the sulfhydryl of the prosthetic group.

Its subcellular location is the cytoplasm. It participates in lipid metabolism; fatty acid biosynthesis. In terms of biological role, carrier of the growing fatty acid chain in fatty acid biosynthesis. The chain is Acyl carrier protein from Xanthomonas albilineans.